Consider the following 234-residue polypeptide: SPX domain-containing protein 6 (234 aa).

The SPX domain occupies M1–E137. The tract at residues G202–Q234 is disordered.

As to expression, predominantly expressed in roots and leaves.

In terms of biological role, may be involved in maintaining cellular Pi homeostasis when plants are exposed to an external change in Pi. In Oryza sativa subsp. japonica (Rice), this protein is SPX domain-containing protein 6.